The primary structure comprises 118 residues: Small ribosomal subunit protein uS13 (118 aa).

The tract at residues 94–118 is disordered; sequence GLPVHGQRTKTNARTRKGPAKSITR.

Belongs to the universal ribosomal protein uS13 family. In terms of assembly, part of the 30S ribosomal subunit. Forms a loose heterodimer with protein S19. Forms two bridges to the 50S subunit in the 70S ribosome.

Located at the top of the head of the 30S subunit, it contacts several helices of the 16S rRNA. In the 70S ribosome it contacts the 23S rRNA (bridge B1a) and protein L5 of the 50S subunit (bridge B1b), connecting the 2 subunits; these bridges are implicated in subunit movement. Contacts the tRNAs in the A and P-sites. This is Small ribosomal subunit protein uS13 from Acidithiobacillus ferrooxidans (strain ATCC 23270 / DSM 14882 / CIP 104768 / NCIMB 8455) (Ferrobacillus ferrooxidans (strain ATCC 23270)).